Here is a 143-residue protein sequence, read N- to C-terminus: Large ribosomal subunit protein uL15 (143 aa).

Positions 1–48 are disordered; it reads MRLNTISPSKGAKHSSKRLGRGIGSGLGKTSGRGHKGQKARSGCSIHR. Basic residues predominate over residues 11–20; the sequence is GAKHSSKRLG. Residues 21-31 show a composition bias toward gly residues; that stretch reads RGIGSGLGKTS.

It belongs to the universal ribosomal protein uL15 family. In terms of assembly, part of the 50S ribosomal subunit.

Functionally, binds to the 23S rRNA. The chain is Large ribosomal subunit protein uL15 from Baumannia cicadellinicola subsp. Homalodisca coagulata.